A 376-amino-acid chain; its full sequence is Uroporphyrinogen decarboxylase (376 aa).

Substrate is bound by residues 29 to 33 (RQAGR), D79, Y155, S210, and H342.

This sequence belongs to the uroporphyrinogen decarboxylase family. As to quaternary structure, homodimer.

Its subcellular location is the cytoplasm. It catalyses the reaction uroporphyrinogen III + 4 H(+) = coproporphyrinogen III + 4 CO2. The protein operates within porphyrin-containing compound metabolism; protoporphyrin-IX biosynthesis; coproporphyrinogen-III from 5-aminolevulinate: step 4/4. Functionally, catalyzes the decarboxylation of four acetate groups of uroporphyrinogen-III to yield coproporphyrinogen-III. This chain is Uroporphyrinogen decarboxylase, found in Paracidovorax citrulli (strain AAC00-1) (Acidovorax citrulli).